A 636-amino-acid polypeptide reads, in one-letter code: 1-deoxy-D-xylulose-5-phosphate synthase (636 aa).

Residues H72 and 113-115 contribute to the thiamine diphosphate site; that span reads GHA. Residue D144 participates in Mg(2+) binding. Residues 145–146, N174, Y287, and E370 each bind thiamine diphosphate; that span reads GA. Residue N174 coordinates Mg(2+).

The protein belongs to the transketolase family. DXPS subfamily. As to quaternary structure, homodimer. The cofactor is Mg(2+). It depends on thiamine diphosphate as a cofactor.

It carries out the reaction D-glyceraldehyde 3-phosphate + pyruvate + H(+) = 1-deoxy-D-xylulose 5-phosphate + CO2. The protein operates within metabolic intermediate biosynthesis; 1-deoxy-D-xylulose 5-phosphate biosynthesis; 1-deoxy-D-xylulose 5-phosphate from D-glyceraldehyde 3-phosphate and pyruvate: step 1/1. Functionally, catalyzes the acyloin condensation reaction between C atoms 2 and 3 of pyruvate and glyceraldehyde 3-phosphate to yield 1-deoxy-D-xylulose-5-phosphate (DXP). The polypeptide is 1-deoxy-D-xylulose-5-phosphate synthase (Microcystis aeruginosa (strain NIES-843 / IAM M-2473)).